A 282-amino-acid chain; its full sequence is Exo-glucosaminidase LytG (282 aa).

The N-terminal stretch at Met-1–Ala-29 is a signal peptide. Positions Ser-203–Ala-281 constitute a GW domain.

The protein belongs to the glycosyl hydrolase 73 family. The cofactor is Mg(2+).

It localises to the secreted. Its subcellular location is the cell wall. Inhibited by EDTA. Functionally, is the major glucosaminidase responsible for peptidoglycan structural determination during vegetative growth. Catalyzes the hydrolysis of 1,4-beta-linkages between N-acetyl-D-glucosamine and N-acetylmuramic acid residues in peptidoglycan. Acts processively from the ends of the glycan strands. Also plays a role in motility, chemotaxis and cell division. This Bacillus subtilis (strain 168) protein is Exo-glucosaminidase LytG (lytG).